The following is a 312-amino-acid chain: Olfactory receptor 2L2 (312 aa).

The Extracellular segment spans residues 1-24 (MENYNQTSTDFILLGLFPQSRIGL). A glycan (N-linked (GlcNAc...) asparagine) is linked at Asn-5. A helical transmembrane segment spans residues 25 to 48 (FVFTLIFLIFLMALIGNLSMILLI). The Cytoplasmic portion of the chain corresponds to 49–56 (FLDIHLHT). A helical transmembrane segment spans residues 57–78 (PMYFLLSQLSLIDLNYISTIVP). Residues 79 to 99 (KMVYDFLYGNKSISFTGCGIQ) lie on the Extracellular side of the membrane. Asn-88 carries an N-linked (GlcNAc...) asparagine glycan. Cys-96 and Cys-188 form a disulfide bridge. The helical transmembrane segment at 100–119 (SFFFLTLAVAEGLLLTSMAY) threads the bilayer. At 120 to 138 (DRYVAICFPLHYPIRISKR) the chain is on the cytoplasmic side. A helical transmembrane segment spans residues 139–157 (VCVMMITGSWMISSINSCA). Over 158-194 (HTVYALCIPYCKSRAINHFFCDVPAMLTLACTDTWVY) the chain is Extracellular. The helical transmembrane segment at 195–218 (ESTVFLSSTIFLVLPFTGIACSYG) threads the bilayer. Residues 219 to 235 (RVLLAVYRMHSAEGRKK) lie on the Cytoplasmic side of the membrane. A helical transmembrane segment spans residues 236 to 258 (AYSTCSTHLTVVSFYYAPFAYTY). Over 259–271 (VRPRSLRSPTEDK) the chain is Extracellular. The chain crosses the membrane as a helical span at residues 272-291 (ILAVFYTILTPMLNPIIYSL). Topologically, residues 292–312 (RNKEVMGALTQVIQKIFSVKM) are cytoplasmic.

This sequence belongs to the G-protein coupled receptor 1 family.

The protein resides in the cell membrane. Functionally, odorant receptor. This is Olfactory receptor 2L2 (OR2L2) from Homo sapiens (Human).